Here is an 86-residue protein sequence, read N- to C-terminus: Beta-toxin CsEI (86 aa).

Positions 1–19 (MNSLLMITACLVLIGTVWA) are cleaved as a signal peptide. One can recognise an LCN-type CS-alpha/beta domain in the interval 20–84 (KDGYLVEKTG…TWPLPNKTCG (65 aa)). Disulfide bonds link Cys-30/Cys-83, Cys-34/Cys-59, Cys-43/Cys-64, and Cys-47/Cys-66. Position 83 is a cysteine amide (Cys-83).

This sequence belongs to the long (4 C-C) scorpion toxin superfamily. Sodium channel inhibitor family. Beta subfamily. Expressed by the venom gland.

It localises to the secreted. In terms of biological role, beta toxins bind voltage-independently at site-4 of sodium channels (Nav) and shift the voltage of activation toward more negative potentials thereby affecting sodium channel activation and promoting spontaneous and repetitive firing. Affects channels from chicken and frog. This Centruroides sculpturatus (Arizona bark scorpion) protein is Beta-toxin CsEI.